Here is a 191-residue protein sequence, read N- to C-terminus: Signal peptidase IB (191 aa).

Residues 1-7 (MKKELLE) lie on the Cytoplasmic side of the membrane. Residues 8-28 (WIISIAVAFVILFIVGKFIVT) form a helical membrane-spanning segment. The Extracellular portion of the chain corresponds to 29–191 (PYTIKGESMD…HNFNPENTKN (163 aa)). Residues serine 36 and lysine 77 contribute to the active site.

It belongs to the peptidase S26 family.

The protein localises to the cell membrane. It carries out the reaction Cleavage of hydrophobic, N-terminal signal or leader sequences from secreted and periplasmic proteins.. In terms of biological role, essential for cell viability. In Staphylococcus aureus (strain Mu50 / ATCC 700699), this protein is Signal peptidase IB (spsB).